A 592-amino-acid polypeptide reads, in one-letter code: MLSLSAKNHFTVSNSITHVIKSYHIRTLTSSAEKMPHITTPFSTSASSTKLKAFRKVRPVLQRHSSSWIVAQNHRRSLSGQSSLNDLRHLNRFPHHTLKTSNNEFYPAEQLTLEDVNENVLKAKYAVRGAIPMRAEELKAQLEKDPQSLPFDRIINANIGNPQQLQQKPLTYYRQVLSLLQYPELLNQNEQQLVDSKLFKLDAIKRAKSLMEDIGGSVGAYSSSQGVEGIRKSVAEFITKRDEGEISYPEDIFLTAGASAAVNYLLSIFCRGPETGVLIPIPQYPLYTATLALNNSQALPYYLDENSGWSTNPEEIETVVKEAIQNEIKPTVLVVINPGNPTGAVLSPESIAQIFEVAAKYGTVVIADEVYQENIFPGTKFHSMKKILRHLQREHPGKFDNVQLASLHSTSKGVSGECGQRGGYMELTGFSHEMRQVILKLASISLCPVVTGQALVDLMVRPPVEGEESFESDQAERNSIHEKLITRAMTLYETFNSLEGIECQKPQGAMYLFPKIDLPFKAVQEARHLELTPDEFYCKKLLESTGICTVPGSGFGQEPGTYHLRTTFLAPGLEWIKKWESFHKEFFDQYRD.

The N-terminal 64 residues, 1–64, are a transit peptide targeting the mitochondrion; sequence MLSLSAKNHF…RKVRPVLQRH (64 aa). S77 is modified (phosphoserine). Positions 258, 259, 284, 340, and 409 each coordinate pyridoxal 5'-phosphate. K412 carries the N6-(pyridoxal phosphate)lysine modification. Position 421 (R421) interacts with pyridoxal 5'-phosphate.

It belongs to the class-I pyridoxal-phosphate-dependent aminotransferase family. Alanine aminotransferase subfamily. In terms of assembly, homodimer. Requires pyridoxal 5'-phosphate as cofactor.

It is found in the mitochondrion matrix. It carries out the reaction L-alanine + 2-oxoglutarate = pyruvate + L-glutamate. It participates in amino-acid degradation; L-alanine degradation via transaminase pathway; pyruvate from L-alanine: step 1/1. In terms of biological role, alanine aminotransferase involved in both alanine biosynthesis and utilization. Under respiratory conditions, constitutes the sole pathway for alanine biosynthesis and catabolism. Under fermentative conditions, it plays a catabolic role and alanine is mainly synthesized through an alternative pathway. This is Alanine aminotransferase, mitochondrial (ALT1) from Saccharomyces cerevisiae (strain ATCC 204508 / S288c) (Baker's yeast).